Consider the following 581-residue polypeptide: mRNA-decapping enzyme 1B (581 aa).

Residue Ser-145 is modified to Phosphoserine. Disordered stretches follow at residues 181 to 222 (QISS…PEPQ) and 236 to 258 (APCQ…PEKF). Residues 204–219 (GSRQQRGPRPGQTSDP) show a composition bias toward polar residues. A compositionally biased stretch (low complexity) spans 244-255 (PPQTLPLQQQQP). Phosphoserine occurs at positions 269 and 326. The tract at residues 349–411 (AENRCEPGAP…HQPVTGPGEV (63 aa)) is disordered. Residues 355–367 (PGAPAPASSATTP) show a composition bias toward low complexity. Thr-366 is subject to Phosphothreonine. Over residues 368–381 (VSLAQPTRLSSALP) the composition is skewed to polar residues. A compositionally biased stretch (pro residues) spans 382–401 (PQTPGPRALPRPAPPGPGPG). A Phosphoserine modification is found at Ser-412. The segment at 427–468 (QQLPAPGRPALAAKFPTATLSTRARNPLEPWRDPPPSTEQPA) is disordered. Ser-475 carries the phosphoserine modification. A disordered region spans residues 498–522 (SWAPPQERSRAPLPPGNQDPAATPT).

This sequence belongs to the DCP1 family. As to quaternary structure, interacts with DCP1A.

The protein localises to the cytoplasm. It localises to the nucleus. It catalyses the reaction a 5'-end (N(7)-methyl 5'-triphosphoguanosine)-ribonucleoside in mRNA + H2O = N(7)-methyl-GDP + a 5'-end phospho-ribonucleoside in mRNA + 2 H(+). In terms of biological role, may play a role in the degradation of mRNAs, both in normal mRNA turnover and in nonsense-mediated mRNA decay. May remove the 7-methyl guanine cap structure from mRNA molecules, yielding a 5'-phosphorylated mRNA fragment and 7m-GDP. This chain is mRNA-decapping enzyme 1B (DCP1B), found in Bos taurus (Bovine).